Reading from the N-terminus, the 202-residue chain is Nudix hydrolase 13, mitochondrial (202 aa).

Residues asparagine 18–leucine 167 enclose the Nudix hydrolase domain. The Nudix box motif lies at glycine 65–glycine 86. Residues glutamate 80 and glutamate 84 each coordinate Mg(2+).

It belongs to the Nudix hydrolase family. In terms of assembly, monomer. It depends on Mg(2+) as a cofactor. As to expression, expressed in roots, leaves, stems and inflorescences.

The protein localises to the mitochondrion. Inhibited by fluoride. Functionally, mediates the hydrolysis of some nucleoside diphosphate derivatives. Can use diadenosine 5',5'''-P(1)P(6) hexaphosphate (Ap(6)A), diadenosine 5',5'''-P(1)P(5) pentaphosphate (Ap(5)A) and adenosine tetraphosphate (p(4)A) as substrates, but not diadenosine 5',5'''-P(1)P(4) tetraphosphate (Ap(4)A), diadenosine 5',5'''-P(1)P(3) triphosphate (Ap(3)A), deoxyribonucleoside triphosphates, ribonucleoside triphosphates, diphosphoinositol pentakisphosphate (PP-InsP(5)) and 5-phospho-alpha-D-ribosyl diphosphate (PRPP). The protein is Nudix hydrolase 13, mitochondrial (NUDT13) of Arabidopsis thaliana (Mouse-ear cress).